A 449-amino-acid polypeptide reads, in one-letter code: Glucose-6-phosphate isomerase (449 aa).

Glutamate 291 functions as the Proton donor in the catalytic mechanism. Active-site residues include histidine 312 and lysine 426.

Belongs to the GPI family.

The protein resides in the cytoplasm. The enzyme catalyses alpha-D-glucose 6-phosphate = beta-D-fructose 6-phosphate. The protein operates within carbohydrate biosynthesis; gluconeogenesis. It participates in carbohydrate degradation; glycolysis; D-glyceraldehyde 3-phosphate and glycerone phosphate from D-glucose: step 2/4. Functionally, catalyzes the reversible isomerization of glucose-6-phosphate to fructose-6-phosphate. In Streptococcus pyogenes serotype M18 (strain MGAS8232), this protein is Glucose-6-phosphate isomerase.